Reading from the N-terminus, the 535-residue chain is T-complex protein 1 subunit zeta 2 (535 aa).

Belongs to the TCP-1 chaperonin family. Heterooligomeric complex of about 850 to 900 kDa that forms two stacked rings, 12 to 16 nm in diameter.

Its subcellular location is the cytoplasm. Functionally, molecular chaperone; assists the folding of proteins upon ATP hydrolysis. Known to play a role, in vitro, in the folding of actin and tubulin. In Arabidopsis thaliana (Mouse-ear cress), this protein is T-complex protein 1 subunit zeta 2.